The chain runs to 629 residues: Glycerol-3-phosphate dehydrogenase SDP6, mitochondrial (629 aa).

A mitochondrion-targeting transit peptide spans M1–L48. FAD is bound at residue D75–E103.

Belongs to the FAD-dependent glycerol-3-phosphate dehydrogenase family. It depends on FAD as a cofactor. Expressed in germinating seedlings. Also detected in roots, leaves, flowers, developing siliques and germinating seeds.

It is found in the mitochondrion inner membrane. The catalysed reaction is a quinone + sn-glycerol 3-phosphate = dihydroxyacetone phosphate + a quinol. The protein operates within polyol metabolism; glycerol degradation via glycerol kinase pathway; glycerone phosphate from sn-glycerol 3-phosphate (anaerobic route): step 1/1. Required for glycerol catabolism and involved in NADH/NAD(+) homeostasis. Essential for postgerminative growth and seedling establishment. The sequence is that of Glycerol-3-phosphate dehydrogenase SDP6, mitochondrial from Arabidopsis thaliana (Mouse-ear cress).